The following is a 156-amino-acid chain: Small ribosomal subunit protein uS7 (156 aa).

It belongs to the universal ribosomal protein uS7 family. Part of the 30S ribosomal subunit. Contacts proteins S9 and S11.

Functionally, one of the primary rRNA binding proteins, it binds directly to 16S rRNA where it nucleates assembly of the head domain of the 30S subunit. Is located at the subunit interface close to the decoding center, probably blocks exit of the E-site tRNA. The polypeptide is Small ribosomal subunit protein uS7 (Colwellia psychrerythraea (strain 34H / ATCC BAA-681) (Vibrio psychroerythus)).